The sequence spans 320 residues: Malate dehydrogenase (320 aa).

Residues G10 to G15 and D34 each bind NAD(+). Residues R83 and R89 each contribute to the substrate site. NAD(+)-binding positions include N96 and I119–N121. Positions 121 and 152 each coordinate substrate. H176 (proton acceptor) is an active-site residue.

This sequence belongs to the LDH/MDH superfamily. MDH type 3 family.

The catalysed reaction is (S)-malate + NAD(+) = oxaloacetate + NADH + H(+). Functionally, catalyzes the reversible oxidation of malate to oxaloacetate. The polypeptide is Malate dehydrogenase (Dinoroseobacter shibae (strain DSM 16493 / NCIMB 14021 / DFL 12)).